The sequence spans 621 residues: MERPHPSSIPTTPGVYLYKDSQGRIIYVGKARNLRKRVLSYFRDGLVITPKTKAMMNHANLLETISTNTEKEALLLEASLIKKHRPRYNIVLRDDKQYLLFRIQKGIPFPRLEIVRQSYKDNAVYFGPFTSGTSVRDTWKFIHKIFPLRRCSDKVFNNRIRPCLYFYLQQCLAPCTEEVDPKDYAVLIQKVELFLSGKSKELVELLQKDMLYASEALEFEKAATLRDQIQAIKHTIERQSVVLPEGGDMDVIGIAVVNNGLALGFLFVREGKLLDGRTFFWPGLELDDGPELLGSFLSQFYSPISSIPPRIIVPWLPESTNNKDEISEDTFETLKYVLEDIRNSTVRIEVPKNIIESNLVDIAVTNAREAVQTKLGEPMSAKLAKVFHTDKPIFRIECVDVSHISGTNTRVGMVVFEDSQPLKNDYRIYSTTEDNSPFIKGDDYAALASWAKRRIQSGPPWADLVLIDGGKGQINAVQRVFNEHHLKDVFILAGIAKARNEEGRVDRRAGNIGDKIFVVGRMNPLTLKEGSPELLFLQYVRDTAHNFVLGKHRKARKNTALLGELLRIPGIGQATAKLLWSHFKTVEAMTCATIKDLEAIPGIGEAKARMLAERLQSLRNQ.

Residues 11 to 90 (TTPGVYLYKD…IKKHRPRYNI (80 aa)) enclose the GIY-YIG domain. Residues 200–235 (KELVELLQKDMLYASEALEFEKAATLRDQIQAIKHT) enclose the UVR domain.

It belongs to the UvrC family. Interacts with UvrB in an incision complex.

It localises to the cytoplasm. Functionally, the UvrABC repair system catalyzes the recognition and processing of DNA lesions. UvrC both incises the 5' and 3' sides of the lesion. The N-terminal half is responsible for the 3' incision and the C-terminal half is responsible for the 5' incision. In Lawsonia intracellularis (strain PHE/MN1-00), this protein is UvrABC system protein C.